A 249-amino-acid polypeptide reads, in one-letter code: Small ribosomal subunit protein uS2 (249 aa).

It belongs to the universal ribosomal protein uS2 family.

The chain is Small ribosomal subunit protein uS2 from Polynucleobacter necessarius subsp. necessarius (strain STIR1).